A 460-amino-acid chain; its full sequence is Mitochondrial distribution and morphology protein 10 (460 aa).

The protein belongs to the MDM10 family. As to quaternary structure, component of the ER-mitochondria encounter structure (ERMES) or MDM complex, composed of MMM1, MDM10, MDM12 and MDM34. Associates with the mitochondrial outer membrane sorting assembly machinery SAM(core) complex.

Its subcellular location is the mitochondrion outer membrane. In terms of biological role, component of the ERMES/MDM complex, which serves as a molecular tether to connect the endoplasmic reticulum and mitochondria. Components of this complex are involved in the control of mitochondrial shape and protein biogenesis and may function in phospholipid exchange. MDM10 is involved in the late assembly steps of the general translocase of the mitochondrial outer membrane (TOM complex). Functions in the TOM40-specific route of the assembly of outer membrane beta-barrel proteins, including the association of TOM40 with the receptor TOM22 and small TOM proteins. Can associate with the SAM(core) complex as well as the MDM12-MMM1 complex, both involved in late steps of the major beta-barrel assembly pathway, that is responsible for biogenesis of all outer membrane beta-barrel proteins. May act as a switch that shuttles between both complexes and channels precursor proteins into the TOM40-specific pathway. Plays a role in mitochondrial morphology and in the inheritance of mitochondria. The polypeptide is Mitochondrial distribution and morphology protein 10 (Candida glabrata (strain ATCC 2001 / BCRC 20586 / JCM 3761 / NBRC 0622 / NRRL Y-65 / CBS 138) (Yeast)).